Here is a 380-residue protein sequence, read N- to C-terminus: Endonuclease III homolog 2 (380 aa).

A Nuclear localization signal motif is present at residues 8–12 (RKRKH). The interval 15–40 (VDIEEVEVRSKYFKKNERTVELVKEN) is interaction with MLH1. Lys194 is covalently cross-linked (Glycyl lysine isopeptide (Lys-Gly) (interchain with G-Cter in SUMO)). The 25-residue stretch at 228-252 (FDSDIPYDIEGILSLPGVGPKMGYL) folds into the HhH domain. Catalysis depends on Lys248, which acts as the Nucleophile; for N-glycosylase activity. [4Fe-4S] cluster contacts are provided by Cys319, Cys326, Cys329, and Cys335. The short motif at 376–380 (RHKKK) is the Nuclear localization signal element.

This sequence belongs to the Nth/MutY family. Interacts with MLH1. [4Fe-4S] cluster serves as cofactor. Post-translationally, monosumoylated.

Its subcellular location is the nucleus. It carries out the reaction 2'-deoxyribonucleotide-(2'-deoxyribose 5'-phosphate)-2'-deoxyribonucleotide-DNA = a 3'-end 2'-deoxyribonucleotide-(2,3-dehydro-2,3-deoxyribose 5'-phosphate)-DNA + a 5'-end 5'-phospho-2'-deoxyribonucleoside-DNA + H(+). Its function is as follows. Bifunctional DNA N-glycosylase with associated apurinic/apyrimidinic (AP) lyase function that catalyzes the first step in base excision repair (BER), the primary repair pathway for the repair of oxidative DNA damage. The DNA N-glycosylase activity releases the damaged DNA base from DNA by cleaving the N-glycosidic bond, leaving an AP site. The AP-lyase activity cleaves the phosphodiester bond 3' to the AP site by a beta-elimination. Primarily recognizes and repairs oxidative base damage of pyrimidines, but also purine-derived lesions, alkylation damage as well as abasic sites. Can also repair the oxidation products of 8-oxoguanine. This Saccharomyces cerevisiae (strain ATCC 204508 / S288c) (Baker's yeast) protein is Endonuclease III homolog 2 (NTG2).